The primary structure comprises 421 residues: Tyrosine--tRNA ligase 1 (421 aa).

Tyr35 serves as a coordination point for L-tyrosine. Positions 40–49 (PTADSLHIGH) match the 'HIGH' region motif. Residues Tyr170 and Gln174 each contribute to the L-tyrosine site. Residues 231 to 235 (KFGKT) carry the 'KMSKS' region motif. Lys234 is a binding site for ATP. The S4 RNA-binding domain maps to 354–420 (LPLVEILVQS…GKKKYFLLTY (67 aa)).

Belongs to the class-I aminoacyl-tRNA synthetase family. TyrS type 1 subfamily. As to quaternary structure, homodimer.

It localises to the cytoplasm. The enzyme catalyses tRNA(Tyr) + L-tyrosine + ATP = L-tyrosyl-tRNA(Tyr) + AMP + diphosphate + H(+). Its function is as follows. Catalyzes the attachment of tyrosine to tRNA(Tyr) in a two-step reaction: tyrosine is first activated by ATP to form Tyr-AMP and then transferred to the acceptor end of tRNA(Tyr). The chain is Tyrosine--tRNA ligase 1 from Bacillus licheniformis (strain ATCC 14580 / DSM 13 / JCM 2505 / CCUG 7422 / NBRC 12200 / NCIMB 9375 / NCTC 10341 / NRRL NRS-1264 / Gibson 46).